The following is a 354-amino-acid chain: Squamosa promoter-binding-like protein 15 (354 aa).

Residues 1–25 (MELLMCSGQAESGGSSSTESSSLSG) form a disordered region. Positions 7 to 25 (SGQAESGGSSSTESSSLSG) are enriched in low complexity. An SBP-type zinc finger spans residues 56 to 133 (TARCQVEGCR…ACHNERRRKP (78 aa)). Zn(2+) contacts are provided by C59, C64, C81, H84, C100, C103, H107, and C119. The Bipartite nuclear localization signal signature appears at 116-132 (KRSCRRRLACHNERRRK).

It depends on Zn(2+) as a cofactor.

The protein resides in the nucleus. Its function is as follows. Trans-acting factor that binds specifically to the consensus nucleotide sequence 5'-TNCGTACAA-3'. This chain is Squamosa promoter-binding-like protein 15 (SPL15), found in Arabidopsis thaliana (Mouse-ear cress).